The following is a 597-amino-acid chain: Protein Spindly (597 aa).

M1 bears the N-acetylmethionine mark. A coiled-coil region spans residues 1 to 445 (MEADITNLRN…LKLKYEPEER (445 aa)). S508 and S547 each carry phosphoserine. A disordered region spans residues 531-597 (PASTEVLHEQ…STPEMQCPQQ (67 aa)). Residues 540–549 (QSGNTPSSPR) show a composition bias toward polar residues. The span at 550-574 (LTEESRLPTKVKERKEATSKLEKGA) shows a compositional bias: basic and acidic residues. Positions 583–597 (YVSSKSTPEMQCPQQ) are enriched in polar residues.

The protein belongs to the Spindly family. In terms of assembly, interacts with KNTC1 and ZW10. These interactions appear weak and may be transient or indirect. Interacts with dynein intermediate chain and dynactin (DCTN1). Interacts with the catalytically active form of USP45. Monoubiquitinated with'Lys-48' linkage. Deubiquitinated by USP45.

It is found in the cytoplasm. Its subcellular location is the cytoskeleton. The protein resides in the microtubule organizing center. It localises to the centrosome. The protein localises to the chromosome. It is found in the centromere. Its subcellular location is the kinetochore. The protein resides in the nucleus. It localises to the spindle pole. Its function is as follows. Required for the localization of dynein and dynactin to the mitotic kintochore. Dynein is believed to control the initial lateral interaction between the kinetochore and spindle microtubules and to facilitate the subsequent formation of end-on kinetochore-microtubule attachments mediated by the NDC80 complex. Also required for correct spindle orientation. Does not appear to be required for the removal of spindle assembly checkpoint (SAC) proteins from the kinetochore upon bipolar spindle attachment. Acts as an adapter protein linking the dynein motor complex to various cargos and converts dynein from a non-processive to a highly processive motor in the presence of dynactin. Facilitates the interaction between dynein and dynactin and activates dynein processivity (the ability to move along a microtubule for a long distance without falling off the track). Plays a role in cell migration. The polypeptide is Protein Spindly (Spdl1) (Rattus norvegicus (Rat)).